Consider the following 285-residue polypeptide: UDP-3-O-acyl-N-acetylglucosamine deacetylase (285 aa).

The Zn(2+) site is built by His89, His243, and Asp247. The active-site Proton donor is His270.

It belongs to the LpxC family. Zn(2+) is required as a cofactor.

It carries out the reaction a UDP-3-O-[(3R)-3-hydroxyacyl]-N-acetyl-alpha-D-glucosamine + H2O = a UDP-3-O-[(3R)-3-hydroxyacyl]-alpha-D-glucosamine + acetate. It participates in glycolipid biosynthesis; lipid IV(A) biosynthesis; lipid IV(A) from (3R)-3-hydroxytetradecanoyl-[acyl-carrier-protein] and UDP-N-acetyl-alpha-D-glucosamine: step 2/6. In terms of biological role, catalyzes the hydrolysis of UDP-3-O-myristoyl-N-acetylglucosamine to form UDP-3-O-myristoylglucosamine and acetate, the committed step in lipid A biosynthesis. The protein is UDP-3-O-acyl-N-acetylglucosamine deacetylase of Thermosynechococcus vestitus (strain NIES-2133 / IAM M-273 / BP-1).